The sequence spans 555 residues: Probable metabolite transport protein YDR387C (555 aa).

Residues 1-39 lie on the Cytoplasmic side of the membrane; it reads MSTDESEDVYSDLYSIISQVTSNTANDIEQLPYALTFKT. The helical transmembrane segment at 40 to 60 threads the bilayer; sequence SLIFVGATIGGLLFGYDTGVI. At 61-83 the chain is on the extracellular side; sequence SGVLLSLKPEDLSLVVLTDVQKE. The chain crosses the membrane as a helical span at residues 84-104; that stretch reads LITSSTSVGSFFGSILAFPLA. The Cytoplasmic portion of the chain corresponds to 105 to 118; it reads DRYGRRITLAICCS. Residues 119–139 form a helical membrane-spanning segment; it reads IFILAAIGMAIARTLTFLICG. Arg140 is a topological domain (extracellular). A helical transmembrane segment spans residues 141–161; the sequence is LLVGIAVGVSAQCVPLFLSEI. Over 162–168 the chain is Cytoplasmic; it reads SPSRIRG. A helical membrane pass occupies residues 169–189; the sequence is FMLTLNIIAITGGQLVSYVIA. Residues 190 to 200 are Extracellular-facing; that stretch reads SLMKEIDNSWR. A helical transmembrane segment spans residues 201–221; it reads YLFALSAIPAILFLSILDFIP. Over 222–356 the chain is Cytoplasmic; sequence ESPRWSISKG…TIRALIVGCM (135 aa). The interval 289 to 313 is disordered; the sequence is SSTSGTLSPPNIKRLSSNTERTSNT. A helical membrane pass occupies residues 357-377; the sequence is LMFFQQITGFNAFMYYAAIIF. Residues 378–384 lie on the Extracellular side of the membrane; sequence SKFNIKN. Residues 385 to 405 traverse the membrane as a helical segment; it reads PLLPPILIASTNFIFTFFAMY. The Cytoplasmic segment spans residues 406 to 413; the sequence is TMDSLGRR. The chain crosses the membrane as a helical span at residues 414-434; sequence AILLRTILIMTVGLLLCSVGF. Residues 435–440 lie on the Extracellular side of the membrane; that stretch reads GHDQVN. The helical transmembrane segment at 441-461 threads the bilayer; it reads LLLISVVIYVAAYASAMGSVP. At 462-474 the chain is on the cytoplasmic side; that stretch reads WTCVEFLPLNRRS. A helical transmembrane segment spans residues 475 to 497; it reads FGASCIACTNWLTNAFVSMTYLS. Topologically, residues 498-506 are extracellular; the sequence is TINTIGDEN. The chain crosses the membrane as a helical span at residues 507 to 527; sequence TMLIFAFFTVCAWFFVYFWYP. Residues 528-555 are Cytoplasmic-facing; it reads EVKGLSLEEVGRVFDNGIDVHYVFRTYH.

The protein belongs to the major facilitator superfamily. Sugar transporter (TC 2.A.1.1) family.

It localises to the membrane. The sequence is that of Probable metabolite transport protein YDR387C from Saccharomyces cerevisiae (strain ATCC 204508 / S288c) (Baker's yeast).